Here is a 458-residue protein sequence, read N- to C-terminus: MNTTPSAHETIHEVIVIGSGPAGYTAALYAARAQLTPLVFEGTSFGGALMTTTEVENYPGFRNGITGPELMDDMREQALRFGAELRTEDVESVSLRGPIKSVVTAEGQTYQARAVILAMGTSVRYLQIPGEQELLGRGVSACATCDGSFFRGQDIAVIGGGDSAMEEALFLTRFARSVTLVHRRDEFRASKIMLGRARNNDKIKFITNHTVVAVNGYTTVTGLRLRNTTTGEETTLVVTGVFVAIGHEPRSSLVSDVVDIDPDGYVLVKGRTTSTSMDGVFAAGDLVDRTYRQAITAAGSGCAAAIDAERWLAEHAGSKANETTEETGDVDSTDTTDWSTAMTDAKNAGVTIEVTDASFFADVLSSNKPVLVDFWATWCGPCKMVAPVLEEIASEQRNQLTVAKLDVDTNPEMAREFQVVSIPTMILFQGGQPVKRIVGAKGKAALLRDLSDVVPNLN.

Positions 1-321 (MNTTPSAHET…LAEHAGSKAN (321 aa)) are thioredoxin reductase. FAD contacts are provided by residues 19–22 (SGPA), 41–48 (EGTSFGGA), Asn-57, and Val-90. Cys-142 and Cys-145 are joined by a disulfide. 5 residues coordinate NADP(+): Ser-163, His-182, Arg-188, Ile-245, and Tyr-265. FAD contacts are provided by residues Asp-285 and 292–295 (RQAI). Arg-292 contributes to the NADP(+) binding site. A linker region spans residues 322-347 (ETTEETGDVDSTDTTDWSTAMTDAKN). Residues 341 to 455 (AMTDAKNAGV…LLRDLSDVVP (115 aa)) enclose the Thioredoxin domain. Cys-379 and Cys-382 are oxidised to a cystine.

This sequence in the N-terminal section; belongs to the class-II pyridine nucleotide-disulfide oxidoreductase family. In terms of assembly, homodimer. Requires FAD as cofactor.

The protein resides in the cytoplasm. The enzyme catalyses [thioredoxin]-dithiol + NADP(+) = [thioredoxin]-disulfide + NADPH + H(+). The sequence is that of Bifunctional thioredoxin reductase/thioredoxin (trxB/A) from Mycobacterium leprae (strain TN).